A 287-amino-acid chain; its full sequence is Ribosomal RNA small subunit methyltransferase A (287 aa).

The segment covering 1–15 (MSKTTFDAQSITNSL) has biased composition (polar residues). The interval 1–20 (MSKTTFDAQSITNSLRAAKH) is disordered. S-adenosyl-L-methionine is bound by residues Asn-29, Leu-31, Gly-56, Glu-77, and Asn-126.

The protein belongs to the class I-like SAM-binding methyltransferase superfamily. rRNA adenine N(6)-methyltransferase family. RsmA subfamily.

The protein localises to the cytoplasm. The catalysed reaction is adenosine(1518)/adenosine(1519) in 16S rRNA + 4 S-adenosyl-L-methionine = N(6)-dimethyladenosine(1518)/N(6)-dimethyladenosine(1519) in 16S rRNA + 4 S-adenosyl-L-homocysteine + 4 H(+). Its function is as follows. Specifically dimethylates two adjacent adenosines (A1518 and A1519) in the loop of a conserved hairpin near the 3'-end of 16S rRNA in the 30S particle. May play a critical role in biogenesis of 30S subunits. This is Ribosomal RNA small subunit methyltransferase A from Psychrobacter cryohalolentis (strain ATCC BAA-1226 / DSM 17306 / VKM B-2378 / K5).